The chain runs to 201 residues: Probable nicotinate-nucleotide adenylyltransferase (201 aa).

It belongs to the NadD family.

The enzyme catalyses nicotinate beta-D-ribonucleotide + ATP + H(+) = deamido-NAD(+) + diphosphate. It participates in cofactor biosynthesis; NAD(+) biosynthesis; deamido-NAD(+) from nicotinate D-ribonucleotide: step 1/1. Its function is as follows. Catalyzes the reversible adenylation of nicotinate mononucleotide (NaMN) to nicotinic acid adenine dinucleotide (NaAD). This is Probable nicotinate-nucleotide adenylyltransferase from Neisseria gonorrhoeae (strain ATCC 700825 / FA 1090).